A 280-amino-acid chain; its full sequence is MLIINDNNLSGLSLQRVNGTGELSVQFKDGRSRISRLYQEGAAKIRMPQAVTGPLEAILINTSGGLTGGDRLKWDVALDDGASAVITTQACERIYRSGGGEARIATRLKAAKGTRLAWLPQETILFNRSILSRRLDVELEEGAQMLVVEATVFGRLAMGERVVAARFADRWRVRLGGRVIHAEEFRLGPDVGAELQAPAVAGGACAMATVLMVCEQAGRYLETARAIIGEEGGCSLWRVGKASKLVVRLYAPDSYALRRRLCPLVALLNGKAGLPKVWTI.

It belongs to the UreD family. UreD, UreF and UreG form a complex that acts as a GTP-hydrolysis-dependent molecular chaperone, activating the urease apoprotein by helping to assemble the nickel containing metallocenter of UreC. The UreE protein probably delivers the nickel.

The protein localises to the cytoplasm. Its function is as follows. Required for maturation of urease via the functional incorporation of the urease nickel metallocenter. In Brucella abortus biovar 1 (strain 9-941), this protein is Urease accessory protein UreD 1.